We begin with the raw amino-acid sequence, 693 residues long: Transforming growth factor beta activator LRRC33 (693 aa).

The signal sequence occupies residues 1–19 (MEFPPLWLCLGFHFLIVEW). Topologically, residues 20–651 (RSGPGTATAA…CKWEQVDTGL (632 aa)) are extracellular. Residues 29–56 (ASQGGCKVVDGVADCRGLNLASVPSSLP) enclose the LRRNT domain. LRR repeat units follow at residues 58–79 (HSRM…SLQA), 82–103 (RLEN…AFRE), 106–127 (HLRN…SAAA), 133–155 (GLRR…MLQN), 158–179 (SLEV…IFEG), 182–203 (HLVE…AFDG), 206–227 (ELRR…SLTQ), 228–239 (LRFLNVSYNILE), 251–272 (ELEI…PQCG), and 273–294 (KLHT…YNTS). N-linked (GlcNAc...) asparagine glycans are attached at residues Asn74 and Asn85. Asn155 carries an N-linked (GlcNAc...) asparagine glycan. Asn232 carries an N-linked (GlcNAc...) asparagine glycan. N-linked (GlcNAc...) asparagine glycans are attached at residues Asn292, Asn309, and Asn312. LRR repeat units lie at residues 329-350 (ALRF…FLKK), 353-374 (SLSH…EHEP), 377-398 (ALTE…PGLT), 403-424 (NLRV…LFDN), 427-448 (SITT…VPVD), 463-484 (SLRS…PFQG), 486-507 (SLTH…SPLW), 512-533 (TLQV…MDFS), 537-558 (NLRA…KGSL), 559-580 (ALRT…VVSE), and 585-605 (GLQT…EGWG). N-linked (GlcNAc...) asparagine glycosylation is found at Asn408 and Asn424. Residue Asn500 is glycosylated (N-linked (GlcNAc...) asparagine). The 39-residue stretch at 606–644 (ALQQHFKTVADLSMVTCNLSSKIVRVVELPEGLPQGCKW) folds into the LRRCT domain. The N-linked (GlcNAc...) asparagine glycan is linked to Asn623. The helical transmembrane segment at 652 to 672 (FYLVLILPSCLTLLVACTVVF) threads the bilayer. The Cytoplasmic portion of the chain corresponds to 673–693 (LTFKKPLLQVIKSRCHWSSIY).

The protein belongs to the LRRC32/LRRC33 family. In terms of assembly, interacts with TGFB1; associates via disulfide bonds with the Latency-associated peptide chain (LAP) regulatory chain of TGFB1, leading to regulate activation of TGF-beta-1. Interacts (via LRR repeats) with TLR2, TLR3, TLR4, TLR9 and probably other Toll-like receptors. Interacts with CYBB/NOX2; the interaction is direct. N-glycosylated. Mainly expressed in cells of hematopoietic origin, such as in immune organs such as lymph nodes, thymus and spleen. Among leukocytes, expressed at higher level in myeloid cell such as macrophages, neutrophils and dendritic cells. Highly expressed in central nervous system-resident macrophages, including microglia and perivascular macrophages.

The protein localises to the cell membrane. Its subcellular location is the endoplasmic reticulum membrane. Key regulator of transforming growth factor beta-1 (TGFB1) specifically required for microglia function in the nervous system. Required for activation of latent TGF-beta-1 in macrophages and microglia: associates specifically via disulfide bonds with the Latency-associated peptide (LAP), which is the regulatory chain of TGFB1, and regulates integrin-dependent activation of TGF-beta-1. TGF-beta-1 activation mediated by LRRC33/NRROS is highly localized: there is little spreading of TGF-beta-1 activated from one microglial cell to neighboring microglia, suggesting the existence of localized and selective activation of TGF-beta-1 by LRRC33/NRROS. Indirectly plays a role in Toll-like receptor (TLR) signaling: ability to inhibit TLR-mediated NF-kappa-B activation and cytokine production is probably a consequence of its role in TGF-beta-1 signaling. The polypeptide is Transforming growth factor beta activator LRRC33 (Mus musculus (Mouse)).